We begin with the raw amino-acid sequence, 344 residues long: Arginine N-succinyltransferase (344 aa).

Leu125 contributes to the succinyl-CoA binding site. The Proton donor role is filled by His229.

The protein belongs to the arginine N-succinyltransferase family.

It carries out the reaction succinyl-CoA + L-arginine = N(2)-succinyl-L-arginine + CoA + H(+). The protein operates within amino-acid degradation; L-arginine degradation via AST pathway; L-glutamate and succinate from L-arginine: step 1/5. Its function is as follows. Catalyzes the transfer of succinyl-CoA to arginine to produce N(2)-succinylarginine. This Escherichia coli O6:K15:H31 (strain 536 / UPEC) protein is Arginine N-succinyltransferase.